A 196-amino-acid polypeptide reads, in one-letter code: Large ribosomal subunit protein eL15 (196 aa).

The tract at residues 162–196 is disordered; it reads RGLTNAGRSNRGLQNRGKGAEHTRPSAGSGSRRGK.

Belongs to the eukaryotic ribosomal protein eL15 family.

In Haloquadratum walsbyi (strain DSM 16790 / HBSQ001), this protein is Large ribosomal subunit protein eL15.